A 98-amino-acid polypeptide reads, in one-letter code: Small ribosomal subunit protein bS20 (98 aa).

The segment covering 1–12 has biased composition (basic residues); sequence MAPKKTTKKGGP. The tract at residues 1–20 is disordered; it reads MAPKKTTKKGGPQKRPSAEK.

The protein belongs to the bacterial ribosomal protein bS20 family.

Binds directly to 16S ribosomal RNA. This is Small ribosomal subunit protein bS20 from Chlamydia caviae (strain ATCC VR-813 / DSM 19441 / 03DC25 / GPIC) (Chlamydophila caviae).